The following is a 273-amino-acid chain: Hydroxyethylthiazole kinase (273 aa).

Position 41 (Met41) interacts with substrate. Arg117 and Thr170 together coordinate ATP. Gly197 contacts substrate.

It belongs to the Thz kinase family. The cofactor is Mg(2+).

The catalysed reaction is 5-(2-hydroxyethyl)-4-methylthiazole + ATP = 4-methyl-5-(2-phosphooxyethyl)-thiazole + ADP + H(+). It participates in cofactor biosynthesis; thiamine diphosphate biosynthesis; 4-methyl-5-(2-phosphoethyl)-thiazole from 5-(2-hydroxyethyl)-4-methylthiazole: step 1/1. Catalyzes the phosphorylation of the hydroxyl group of 4-methyl-5-beta-hydroxyethylthiazole (THZ). The sequence is that of Hydroxyethylthiazole kinase from Clostridium acetobutylicum (strain ATCC 824 / DSM 792 / JCM 1419 / IAM 19013 / LMG 5710 / NBRC 13948 / NRRL B-527 / VKM B-1787 / 2291 / W).